The sequence spans 2289 residues: Protein Ycf2 (2289 aa).

1643 to 1650 (GSIGTGRS) lines the ATP pocket.

This sequence belongs to the Ycf2 family.

The protein resides in the plastid. It is found in the chloroplast stroma. Probable ATPase of unknown function. Its presence in a non-photosynthetic plant (Epifagus virginiana) and experiments in tobacco indicate that it has an essential function which is probably not related to photosynthesis. This chain is Protein Ycf2, found in Aethionema grandiflorum (Persian stone-cress).